We begin with the raw amino-acid sequence, 609 residues long: Proteasome-associated ATPase (609 aa).

The disordered stretch occupies residues Met-1–Glu-25. Positions Ser-19 to Gln-96 form a coiled coil. Gly-296 to Leu-301 serves as a coordination point for ATP. The tract at residues Tyr-608–Leu-609 is docks into pockets in the proteasome alpha-ring.

Belongs to the AAA ATPase family. Homohexamer. Assembles into a hexameric ring structure that caps the 20S proteasome core. Strongly interacts with the prokaryotic ubiquitin-like protein Pup through a hydrophobic interface; the interacting region of ARC lies in its N-terminal coiled-coil domain. There is one Pup binding site per ARC hexamer ring. Upon ATP-binding, the C-terminus of ARC interacts with the alpha-rings of the proteasome core, possibly by binding to the intersubunit pockets.

It functions in the pathway protein degradation; proteasomal Pup-dependent pathway. Its function is as follows. ATPase which is responsible for recognizing, binding, unfolding and translocation of pupylated proteins into the bacterial 20S proteasome core particle. May be essential for opening the gate of the 20S proteasome via an interaction with its C-terminus, thereby allowing substrate entry and access to the site of proteolysis. Thus, the C-termini of the proteasomal ATPase may function like a 'key in a lock' to induce gate opening and therefore regulate proteolysis. The chain is Proteasome-associated ATPase from Mycobacterium marinum (strain ATCC BAA-535 / M).